The following is a 428-amino-acid chain: Elongation factor 1-alpha (428 aa).

The 221-residue stretch at Lys5–Thr225 folds into the tr-type G domain. Positions Gly14 to Ser21 are G1. Residue Gly14–Ser21 coordinates GTP. Ser21 is a Mg(2+) binding site. The segment at Gly70 to Asp74 is G2. Residues Asp91–Gly94 form a G3 region. Residues Asp91–His95 and Asn149–Asp152 each bind GTP. A G4 region spans residues Asn149–Asp152. Positions Ala189 to Leu191 are G5.

This sequence belongs to the TRAFAC class translation factor GTPase superfamily. Classic translation factor GTPase family. EF-Tu/EF-1A subfamily.

It is found in the cytoplasm. It catalyses the reaction GTP + H2O = GDP + phosphate + H(+). Functionally, GTP hydrolase that promotes the GTP-dependent binding of aminoacyl-tRNA to the A-site of ribosomes during protein biosynthesis. In Methanococcus maripaludis (strain C7 / ATCC BAA-1331), this protein is Elongation factor 1-alpha.